The chain runs to 168 residues: Photosystem I assembly protein Ycf3 (168 aa).

TPR repeat units follow at residues 35-68, 72-105, and 120-153; these read AFTY…EIDP, SYIL…NSFL, and GEQA…TPGN.

It belongs to the Ycf3 family.

The protein resides in the plastid. Its subcellular location is the chloroplast thylakoid membrane. In terms of biological role, essential for the assembly of the photosystem I (PSI) complex. May act as a chaperone-like factor to guide the assembly of the PSI subunits. This Jasminum nudiflorum (Winter jasmine) protein is Photosystem I assembly protein Ycf3.